A 119-amino-acid polypeptide reads, in one-letter code: Large ribosomal subunit protein uL22 (119 aa).

This sequence belongs to the universal ribosomal protein uL22 family. In terms of assembly, part of the 50S ribosomal subunit.

Functionally, this protein binds specifically to 23S rRNA; its binding is stimulated by other ribosomal proteins, e.g. L4, L17, and L20. It is important during the early stages of 50S assembly. It makes multiple contacts with different domains of the 23S rRNA in the assembled 50S subunit and ribosome. In terms of biological role, the globular domain of the protein is located near the polypeptide exit tunnel on the outside of the subunit, while an extended beta-hairpin is found that lines the wall of the exit tunnel in the center of the 70S ribosome. The sequence is that of Large ribosomal subunit protein uL22 from Rickettsia prowazekii (strain Madrid E).